The sequence spans 387 residues: S-adenosylmethionine synthase (387 aa).

An ATP-binding site is contributed by histidine 15. Residue aspartate 17 coordinates Mg(2+). Glutamate 43 provides a ligand contact to K(+). The L-methionine site is built by glutamate 56 and glutamine 99. The flexible loop stretch occupies residues 99 to 109 (QSPDIAQGVNA). ATP is bound by residues 166–168 (DAK), 232–233 (RF), aspartate 241, 247–248 (RK), alanine 264, and lysine 268. L-methionine is bound at residue aspartate 241. Lysine 272 provides a ligand contact to L-methionine.

This sequence belongs to the AdoMet synthase family. As to quaternary structure, homotetramer; dimer of dimers. It depends on Mg(2+) as a cofactor. The cofactor is K(+).

It localises to the cytoplasm. It catalyses the reaction L-methionine + ATP + H2O = S-adenosyl-L-methionine + phosphate + diphosphate. It participates in amino-acid biosynthesis; S-adenosyl-L-methionine biosynthesis; S-adenosyl-L-methionine from L-methionine: step 1/1. In terms of biological role, catalyzes the formation of S-adenosylmethionine (AdoMet) from methionine and ATP. The overall synthetic reaction is composed of two sequential steps, AdoMet formation and the subsequent tripolyphosphate hydrolysis which occurs prior to release of AdoMet from the enzyme. This Dechloromonas aromatica (strain RCB) protein is S-adenosylmethionine synthase.